Here is a 571-residue protein sequence, read N- to C-terminus: Proline--tRNA ligase (571 aa).

This sequence belongs to the class-II aminoacyl-tRNA synthetase family. ProS type 1 subfamily. In terms of assembly, homodimer.

It is found in the cytoplasm. The enzyme catalyses tRNA(Pro) + L-proline + ATP = L-prolyl-tRNA(Pro) + AMP + diphosphate. In terms of biological role, catalyzes the attachment of proline to tRNA(Pro) in a two-step reaction: proline is first activated by ATP to form Pro-AMP and then transferred to the acceptor end of tRNA(Pro). As ProRS can inadvertently accommodate and process non-cognate amino acids such as alanine and cysteine, to avoid such errors it has two additional distinct editing activities against alanine. One activity is designated as 'pretransfer' editing and involves the tRNA(Pro)-independent hydrolysis of activated Ala-AMP. The other activity is designated 'posttransfer' editing and involves deacylation of mischarged Ala-tRNA(Pro). The misacylated Cys-tRNA(Pro) is not edited by ProRS. The protein is Proline--tRNA ligase of Pseudomonas syringae pv. syringae (strain B728a).